The primary structure comprises 392 residues: MMCGFASNQSPKKLSSKKSSATNVHLEISPVKHHPPCKVYENVQGSCLDSAICTTVAKCADLTDDLPVHNKENLLHRLNDLETNSYEEYSALQDSGYSSILQNDSPCQDETDRKVSDIQVRETPKNFMSYQRPFHTLSKINLPILRFEEAVCSTLKKMRKTNKKIDWNAVDVVCGGNYGLEHLIGKSMGLERFDILAELFHRDFKHLLTKILRHLSAMDLINVISVSTTWRKLLQKDNWAYNAYKLGCKELCEKRAKVSSHTATRDESLCRVPLASVQKVAASSLCTSKKQSKNKNGGLSCNRLAEFIEVAQTLKNDQSLKVCVDCGSPAKHDPCLHRAICTRESCKLDFCTRCSCKYHFSKSCLMSKPGSYRIPSEPLPGSKKSKQNLRRL.

A disordered region spans residues 1-21 (MMCGFASNQSPKKLSSKKSSA). The segment covering 7–20 (SNQSPKKLSSKKSS) has biased composition (low complexity). One can recognise an F-box domain in the interval 197–244 (AELFHRDFKHLLTKILRHLSAMDLINVISVSTTWRKLLQKDNWAYNAY). The ZBR-type zinc finger occupies 319–367 (SLKVCVDCGSPAKHDPCLHRAICTRESCKLDFCTRCSCKYHFSKSCLMS). The Zn(2+) site is built by cysteine 323, cysteine 326, cysteine 341, cysteine 346, cysteine 351, cysteine 354, histidine 359, and cysteine 364.

As to quaternary structure, part of a SCF (SKP1-cullin-F-box) protein ligase complex. Interacts with btrc. Interacts with skp1. Interacts with cdc20. Interacts with pin1; stabilizes fbxo5 by preventing its association with btrc in an isomerization-dependent pathway; this interaction is present during G2 phase and prevents fbxo5 degradation. Interacts with plk1. In terms of processing, proteolysed; proteolysis is induced by both cyclin B-cdk1 and cyclin A-cdk1/2 complex through probable phosphorylation. Proteolysis is inhibited by pin1 during G2.

It is found in the nucleus. The protein localises to the cytoplasm. It localises to the cytoskeleton. The protein resides in the spindle. Its subcellular location is the microtubule organizing center. It is found in the centrosome. The protein operates within protein modification; protein ubiquitination. Regulates progression through early mitosis by inhibiting the anaphase promoting complex/cyclosome (APC). Binds to the APC activator cdc20 to prevent APC activation. Can also bind directly to the APC to inhibit substrate-binding. Required to arrest unfertilized eggs at metaphase of meiosis II, by preventing their release from metaphase of meiosis II, through inhibition of APC-dependent cyclin B destruction leading to stabilization of cyclin B-cdk1 complex activity. The protein is F-box only protein 5-A (fbxo5-a) of Xenopus laevis (African clawed frog).